A 214-amino-acid chain; its full sequence is Large ribosomal subunit protein uL16 (214 aa).

The residue at position 32 (R32) is a Citrulline. K175 participates in a covalent cross-link: Glycyl lysine isopeptide (Lys-Gly) (interchain with G-Cter in SUMO2). K188 participates in a covalent cross-link: Glycyl lysine isopeptide (Lys-Gly) (interchain with G-Cter in ubiquitin).

This sequence belongs to the universal ribosomal protein uL16 family. In terms of assembly, component of the large ribosomal subunit. Mature ribosomes consist of a small (40S) and a large (60S) subunit. The 40S subunit contains about 33 different proteins and 1 molecule of RNA (18S). The 60S subunit contains about 49 different proteins and 3 molecules of RNA (28S, 5.8S and 5S). Post-translationally, citrullinated by PADI4. In terms of processing, ufmylated by UFL1.

It is found in the cytoplasm. Its function is as follows. Component of the large ribosomal subunit. Plays a role in the formation of actively translating ribosomes. May play a role in the embryonic brain development. This chain is Large ribosomal subunit protein uL16 (RPL10), found in Oryctolagus cuniculus (Rabbit).